The chain runs to 372 residues: 3,5-dihydroxyphenylacetyl-CoA synthase (372 aa).

Residue cysteine 160 is part of the active site.

It belongs to the thiolase-like superfamily. Chalcone/stilbene synthases family.

It catalyses the reaction 4 malonyl-CoA + 4 H(+) = (3,5-dihydroxyphenyl)acetyl-CoA + 4 CO2 + 3 CoA + H2O. It functions in the pathway antibiotic biosynthesis. Its function is as follows. Involved in the biosynthesis of the nonproteinogenic amino acid monomer (S)-3,5-dihydroxyphenylglycine (Dpg) responsible of the production of balhimycin antibiotic. Catalyzes the Claisen condensation of four molecules of malonyl-CoA to yield 3,5-dihydroxyphenylacetyl-CoA (DPA-CoA) and three free coenzyme A (CoA). DpgA requires the presence of the dehydratases DpgB and DpgD to facilitate the aromatization of the DPA-S-DgpA or DPA-S-CoA intermediate. This Amycolatopsis balhimycina protein is 3,5-dihydroxyphenylacetyl-CoA synthase.